We begin with the raw amino-acid sequence, 155 residues long: Microsomal glutathione S-transferase 1 (155 aa).

The Lumenal segment spans residues 3 to 9; that stretch reads NLSQLME. The helical transmembrane segment at 10-33 threads the bilayer; it reads NEVFMAFASYTTIVLSKMNFMSTA. Topologically, residues 34-62 are cytoplasmic; that stretch reads TAFYRLTKKVFANPEDCAGFGKGENAKKY. Glutathione is bound at residue R38. N6-acetyllysine occurs at positions 42, 55, and 60. Residues 63–96 form a helical membrane-spanning segment; it reads LRTDDRVERVRRAHLNDLENIVPFLGIGLLYSLS. Glutathione is bound by residues R73, R74, H76, and E81. Residues 97 to 99 lie on the Lumenal side of the membrane; sequence GPD. A helical membrane pass occupies residues 100 to 123; the sequence is LSTAILHFRLFVRARIYHTIAYLT. Y121 is a binding site for glutathione. Residues 124–128 are Cytoplasmic-facing; it reads PLPQP. Residues 129–148 form a helical membrane-spanning segment; the sequence is NRALAFFIGYGVTLSMAYRL. The Lumenal portion of the chain corresponds to 149 to 155; sequence LKSKLYL.

Belongs to the MAPEG family. As to quaternary structure, homotrimer; The trimer binds only one molecule of glutathione.

The protein localises to the endoplasmic reticulum membrane. It is found in the mitochondrion outer membrane. The enzyme catalyses RX + glutathione = an S-substituted glutathione + a halide anion + H(+). Its function is as follows. Conjugation of reduced glutathione to a wide number of exogenous and endogenous hydrophobic electrophiles. This is Microsomal glutathione S-transferase 1 (MGST1) from Bos taurus (Bovine).